The chain runs to 628 residues: Serine/threonine-protein kinase Nek11 (628 aa).

In terms of domain architecture, Protein kinase spans 30–288 (YVLQQKLGSG…AADILKAPYM (259 aa)). ATP-binding positions include 36–44 (LGSGSFGTV) and K62. D159 acts as the Proton acceptor in catalysis. S274 carries the phosphoserine; by CHEK1 modification. The stretch at 347–385 (WLRKLQAADERARRLKKIAEENYKENDKRMQALRSRNVG) forms a coiled coil. A compositionally biased stretch (acidic residues) spans 452 to 463 (SEDSEEQEEEMI). The segment at 452 to 475 (SEDSEEQEEEMIFSEAGGDTKEEE) is disordered.

It belongs to the protein kinase superfamily. NEK Ser/Thr protein kinase family. NIMA subfamily. Interacts with NEK2. It depends on Mn(2+) as a cofactor. The cofactor is Mg(2+). Post-translationally, phosphorylated by NEK2. Phosphorylation at Ser-274 is important for its activation.

The protein localises to the nucleus. It is found in the nucleolus. The enzyme catalyses L-seryl-[protein] + ATP = O-phospho-L-seryl-[protein] + ADP + H(+). The catalysed reaction is L-threonyl-[protein] + ATP = O-phospho-L-threonyl-[protein] + ADP + H(+). Its activity is regulated as follows. Autorepressed by intramolecular binding of the C-terminus which dissociates following phosphorylation by NEK2. Activated in response to DNA damage. Inhibited by zinc. Its function is as follows. Protein kinase which plays an important role in the G2/M checkpoint response to DNA damage. Controls degradation of CDC25A by directly phosphorylating it on residues whose phosphorylation is required for BTRC-mediated polyubiquitination and degradation. This Mus musculus (Mouse) protein is Serine/threonine-protein kinase Nek11.